The chain runs to 663 residues: Alcohol oxidase 2 (663 aa).

Aspartate 8–glutamate 38 provides a ligand contact to FAD. Catalysis depends on histidine 567, which acts as the Proton acceptor. Residues alanine 661–phenylalanine 663 carry the Microbody targeting signal motif.

Belongs to the GMC oxidoreductase family. In terms of assembly, homooctamer. The cofactor is FAD.

The protein resides in the peroxisome matrix. The catalysed reaction is a primary alcohol + O2 = an aldehyde + H2O2. The protein operates within energy metabolism; methane degradation. Functionally, minor isoform of alcohol oxidase, which catalyzes the oxidation of methanol to formaldehyde and hydrogen peroxide, the first step in the methanol utilization pathway of methylotrophic yeasts. This chain is Alcohol oxidase 2 (AOX2), found in Komagataella phaffii (strain ATCC 76273 / CBS 7435 / CECT 11047 / NRRL Y-11430 / Wegner 21-1) (Yeast).